Here is a 307-residue protein sequence, read N- to C-terminus: Fe-S cluster assembly protein dre2 (307 aa).

Disordered regions lie at residues 1-26 (MTPVPVSVDTTADFAAPPTKTAPSTS) and 159-179 (KKKKAPAPTEQPPVATGVGFV). Positions 15–26 (AAPPTKTAPSTS) are enriched in low complexity. Residues 23-152 (PSTSTRTLLL…EKPAYQEAAV (130 aa)) form an N-terminal SAM-like domain region. The linker stretch occupies residues 153–197 (PLRLGGKKKKAPAPTEQPPVATGVGFVDGNDELIDEDDLLSDDDL). Positions 207, 219, 222, and 224 each coordinate [2Fe-2S] cluster. A fe-S binding site A region spans residues 207-224 (CQPEKAKKRRRPCKDCTC). The [4Fe-4S] cluster site is built by cysteine 270, cysteine 273, cysteine 281, and cysteine 284. Short sequence motifs (cx2C motif) lie at residues 270–273 (CNSC) and 281–284 (CSSC). The segment at 270 to 284 (CNSCSLGDAFRCSSC) is fe-S binding site B.

It belongs to the anamorsin family. In terms of assembly, monomer. Interacts with tah18. Interacts with mia40. The cofactor is [2Fe-2S] cluster. [4Fe-4S] cluster is required as a cofactor.

Its subcellular location is the cytoplasm. The protein localises to the mitochondrion intermembrane space. Functionally, component of the cytosolic iron-sulfur (Fe-S) protein assembly (CIA) machinery required for the maturation of extramitochondrial Fe-S proteins. Part of an electron transfer chain functioning in an early step of cytosolic Fe-S biogenesis, facilitating the de novo assembly of a [4Fe-4S] cluster on the scaffold complex cfd1-nbp35. Electrons are transferred to dre2 from NADPH via the FAD- and FMN-containing protein tah18. Tah18-dre2 are also required for the assembly of the diferric tyrosyl radical cofactor of ribonucleotide reductase (RNR), probably by providing electrons for reduction during radical cofactor maturation in the catalytic small subunit rnr2. This Aspergillus terreus (strain NIH 2624 / FGSC A1156) protein is Fe-S cluster assembly protein dre2.